The chain runs to 361 residues: S-adenosylmethionine:tRNA ribosyltransferase-isomerase (361 aa).

Belongs to the QueA family. As to quaternary structure, monomer.

The protein localises to the cytoplasm. It carries out the reaction 7-aminomethyl-7-carbaguanosine(34) in tRNA + S-adenosyl-L-methionine = epoxyqueuosine(34) in tRNA + adenine + L-methionine + 2 H(+). It participates in tRNA modification; tRNA-queuosine biosynthesis. Functionally, transfers and isomerizes the ribose moiety from AdoMet to the 7-aminomethyl group of 7-deazaguanine (preQ1-tRNA) to give epoxyqueuosine (oQ-tRNA). The sequence is that of S-adenosylmethionine:tRNA ribosyltransferase-isomerase from Methylocella silvestris (strain DSM 15510 / CIP 108128 / LMG 27833 / NCIMB 13906 / BL2).